The sequence spans 113 residues: ATFSEAPPGDPKAGEKIFKTKCAZCHTVZKGAGHKQGPNLHGLFGRQSGTTAGYSYSTGNKNKAVNWGZZTLYEYLLNPKKYIPGTKMVFPGLKKPZZRADLISYLKQATSQE.

An N-acetylalanine modification is found at Ala-1. Heme c is bound by residues Cys-22, Cys-25, and His-26. Lys-80 carries the N6,N6,N6-trimethyllysine modification. Met-88 lines the heme c pocket. Lys-94 carries the post-translational modification N6,N6,N6-trimethyllysine.

This sequence belongs to the cytochrome c family. In terms of processing, binds 1 heme c group covalently per subunit.

The protein localises to the mitochondrion intermembrane space. Electron carrier protein. The oxidized form of the cytochrome c heme group can accept an electron from the heme group of the cytochrome c1 subunit of cytochrome reductase. Cytochrome c then transfers this electron to the cytochrome oxidase complex, the final protein carrier in the mitochondrial electron-transport chain. The protein is Cytochrome c of Ginkgo biloba (Ginkgo).